Consider the following 562-residue polypeptide: NRAMP-like transporter smf-1 (562 aa).

The Cytoplasmic segment spans residues 1-55; the sequence is MASSNNDGPIEPEAEPWRITQNDHLEQDLLEEDAESQERVDIPVDDVEKAFSFKK. A helical transmembrane segment spans residues 56–76; it reads LWAFTGPGFLMSIAYLDPGNI. Over 77–83 the chain is Extracellular; the sequence is ESDLQSG. The chain crosses the membrane as a helical span at residues 84–104; it reads AQAAYKLLWVLLSAHIIGMLL. Residues 105-140 are Cytoplasmic-facing; it reads QRMSARLGVVSGKHMAEVAYQFYPRLPRIILWLMIE. A helical transmembrane segment spans residues 141–161; the sequence is IAIVCSDMQEVIGTAIAIFLL. Residues 162-164 lie on the Extracellular side of the membrane; that stretch reads SKG. The chain crosses the membrane as a helical span at residues 165-185; sequence FVPLYVGVFITILDTFTFLLI. The Cytoplasmic segment spans residues 186 to 194; the sequence is DRYGIRKLE. A helical transmembrane segment spans residues 195–215; the sequence is LIFGFLILTMTVSFGYEFVVV. Over 216 to 241 the chain is Extracellular; that stretch reads KPPIGEVISGMVVPWCAGCGKGEFMQ. A helical transmembrane segment spans residues 242–262; the sequence is AISVVGAVIMPHNLYLHSALV. Residues 263 to 287 lie on the Cytoplasmic side of the membrane; the sequence is KSRRVDRKDRRRVAEANKYFTLESA. Residues 288–308 form a helical membrane-spanning segment; that stretch reads IALFLSFFINLFVVAVFAHGL. Residues 309–347 lie on the Extracellular side of the membrane; that stretch reads YQKTNADVREMCIARHDIPDADIFPNNTEPVEVDIYKGG. A glycan (N-linked (GlcNAc...) asparagine) is linked at Asn334. A helical transmembrane segment spans residues 348–368; sequence IYLGCQFGAIAMFIWGIGIFA. The Cytoplasmic segment spans residues 369–398; that stretch reads AGQSSTMTGTYTGQFVMEGFVKIEWPKWKR. Residues 399–419 traverse the membrane as a helical segment; it reads VLITRAIAITPTLVLTFYSQG. Over 420–428 the chain is Extracellular; it reads VQNLTGMND. Asn422 carries an N-linked (GlcNAc...) asparagine glycan. The chain crosses the membrane as a helical span at residues 429-449; that stretch reads FLNCVQMIQLPFALIPIITFT. Topologically, residues 450–462 are cytoplasmic; sequence SSRKIMHDFRSSK. Residues 463–483 form a helical membrane-spanning segment; sequence VFQIFALITSALILSINVYFI. At 484-496 the chain is on the extracellular side; it reads SDYVFSRLGSEWY. The helical transmembrane segment at 497–517 threads the bilayer; sequence IIMVLAPITFAYVLFVLYLAL. The Cytoplasmic segment spans residues 518 to 562; sequence YCLVSCEIIPDTVSIRGFSFNKSYENDAPWLAVDSSAVHDNAGYQ.

This sequence belongs to the NRAMP family. Expressed in dopaminergic neurons (at protein level). Expressed predominantly in anterior and posterior intestine, rectal gland cell, H-shaped excretory cell, vulva cells, proximal uterus and spermatheca in adults. Weakly expressed in hyp7 hypodermis, pharyngeal muscles and some anterior sensory, ring and posterior head neurons in adults. Expressed in the anchor cell at the larval stage.

Its subcellular location is the apical cell membrane. It localises to the cytoplasmic vesicle membrane. Functionally, probable divalent metal ion transporter which regulates Mn(2+) uptake. The protein is NRAMP-like transporter smf-1 (smf-1) of Caenorhabditis elegans.